The primary structure comprises 190 residues: MAKANEIKRGMAVNLNGKLLLVKDIDVQSPSARGASTLYKMRFSDVRTGLKVEERFKGDENLDTITLTRRAVNFSYIDGDEYVFMDDEDYTPYNFKKEQIEDELLFIPEGGMPGMQVLTMEGQLLALELPQTVDMEIVDTAPSIKGASASARNKPAIMSTGLSIQVPEYISPGEKIRIHIAERRYMGRAD.

The protein belongs to the elongation factor P family.

This chain is Elongation factor P-like protein, found in Yersinia pestis bv. Antiqua (strain Antiqua).